The following is an 871-amino-acid chain: uncharacterized protein (871 aa).

The next 11 membrane-spanning stretches (helical) occupy residues 11 to 31 (AFVS…GLFL), 92 to 112 (YLFT…PILL), 139 to 159 (FYAH…IIYR), 380 to 400 (TILT…GCIS), 422 to 442 (LLGI…MSLV), 475 to 495 (VQVF…VQVI), 520 to 540 (FLLQ…TLLL), 562 to 582 (LSAP…TIMI), 586 to 606 (IIAP…YFAY), 629 to 649 (LFQV…LFVL), and 653 to 673 (WGAT…HLYF). 6 positions are modified to phosphoserine: S725, S726, S727, S729, S737, and S761. Residues 727–740 (SGSDEFLETSSRTS) are compositionally biased toward polar residues. The disordered stretch occupies residues 727-746 (SGSDEFLETSSRTSENTKEK).

The protein belongs to the CSC1 (TC 1.A.17) family.

It localises to the golgi apparatus membrane. In terms of biological role, acts as an osmosensitive calcium-permeable cation channel. This is an uncharacterized protein from Schizosaccharomyces pombe (strain 972 / ATCC 24843) (Fission yeast).